We begin with the raw amino-acid sequence, 164 residues long: Peptidyl-prolyl cis-trans isomerase A-like 4D (164 aa).

Residues 7 to 163 (FFEITRDGKP…KKITIADCGQ (157 aa)) form the PPIase cyclophilin-type domain.

It belongs to the cyclophilin-type PPIase family. PPIase A subfamily.

It localises to the cytoplasm. It carries out the reaction [protein]-peptidylproline (omega=180) = [protein]-peptidylproline (omega=0). In terms of biological role, PPIases accelerate the folding of proteins. It catalyzes the cis-trans isomerization of proline imidic peptide bonds in oligopeptides. The polypeptide is Peptidyl-prolyl cis-trans isomerase A-like 4D (Homo sapiens (Human)).